The sequence spans 175 residues: Large ribosomal subunit protein mL67 (175 aa).

It belongs to the mitochondrion-specific ribosomal protein mL67 family. Component of the mitochondrial large ribosomal subunit (mt-LSU). Mature yeast 74S mitochondrial ribosomes consist of a small (37S) and a large (54S) subunit. The 37S small subunit contains a 15S ribosomal RNA (15S mt-rRNA) and at least 32 different proteins. The 54S large subunit contains a 21S rRNA (21S mt-rRNA) and at least 45 different proteins.

It is found in the mitochondrion. In terms of biological role, component of the mitochondrial ribosome (mitoribosome), a dedicated translation machinery responsible for the synthesis of mitochondrial genome-encoded proteins, including at least some of the essential transmembrane subunits of the mitochondrial respiratory chain. The mitoribosomes are attached to the mitochondrial inner membrane and translation products are cotranslationally integrated into the membrane. mL67/mhr1 also has extraribosomal functions, being involved in regulation of mitochondrial DNA recombination, maintenance and repair, and generation of homoplasmic cells. mL67/mhr1 also acts as transcription factor involved in regulation of RNA polymerase II-dependent transcription. The sequence is that of Large ribosomal subunit protein mL67 (mhr1) from Schizosaccharomyces pombe (strain 972 / ATCC 24843) (Fission yeast).